Here is a 221-residue protein sequence, read N- to C-terminus: Pleckstrin homology domain-containing family B member 2 (221 aa).

The region spanning 2–109 (AFVKSGWLLR…WKFTLQDSRT (108 aa)) is the PH domain. Residue Lys-20 coordinates a 1,2-diacyl-sn-glycero-3-phospho-L-serine.

In terms of tissue distribution, highly expressed in brain, retina, heart and kidney. Detected at lower levels in lung, muscle and nerve.

It is found in the recycling endosome membrane. Its function is as follows. Involved in retrograde transport of recycling endosomes. This Mus musculus (Mouse) protein is Pleckstrin homology domain-containing family B member 2 (Plekhb2).